The sequence spans 337 residues: Holliday junction branch migration complex subunit RuvB (337 aa).

A large ATPase domain (RuvB-L) region spans residues 4 to 185; that stretch reads ADRLISNSFE…FGITQRLEYY (182 aa). ATP contacts are provided by residues Ile-24, Arg-25, Gly-66, Lys-69, Thr-70, Thr-71, 132 to 134, Arg-175, Tyr-185, and Arg-222; that span reads EDY. Thr-70 serves as a coordination point for Mg(2+). The small ATPAse domain (RuvB-S) stretch occupies residues 186–256; it reads KVDDLKDIVQ…TAKKALDMLD (71 aa). The head domain (RuvB-H) stretch occupies residues 259-337; sequence SSGFDYMDRK…HFGLDIPEAR (79 aa). Residues Arg-314 and Arg-319 each coordinate DNA.

Belongs to the RuvB family. Homohexamer. Forms an RuvA(8)-RuvB(12)-Holliday junction (HJ) complex. HJ DNA is sandwiched between 2 RuvA tetramers; dsDNA enters through RuvA and exits via RuvB. An RuvB hexamer assembles on each DNA strand where it exits the tetramer. Each RuvB hexamer is contacted by two RuvA subunits (via domain III) on 2 adjacent RuvB subunits; this complex drives branch migration. In the full resolvosome a probable DNA-RuvA(4)-RuvB(12)-RuvC(2) complex forms which resolves the HJ.

It localises to the cytoplasm. It carries out the reaction ATP + H2O = ADP + phosphate + H(+). The RuvA-RuvB-RuvC complex processes Holliday junction (HJ) DNA during genetic recombination and DNA repair, while the RuvA-RuvB complex plays an important role in the rescue of blocked DNA replication forks via replication fork reversal (RFR). RuvA specifically binds to HJ cruciform DNA, conferring on it an open structure. The RuvB hexamer acts as an ATP-dependent pump, pulling dsDNA into and through the RuvAB complex. RuvB forms 2 homohexamers on either side of HJ DNA bound by 1 or 2 RuvA tetramers; 4 subunits per hexamer contact DNA at a time. Coordinated motions by a converter formed by DNA-disengaged RuvB subunits stimulates ATP hydrolysis and nucleotide exchange. Immobilization of the converter enables RuvB to convert the ATP-contained energy into a lever motion, pulling 2 nucleotides of DNA out of the RuvA tetramer per ATP hydrolyzed, thus driving DNA branch migration. The RuvB motors rotate together with the DNA substrate, which together with the progressing nucleotide cycle form the mechanistic basis for DNA recombination by continuous HJ branch migration. Branch migration allows RuvC to scan DNA until it finds its consensus sequence, where it cleaves and resolves cruciform DNA. The polypeptide is Holliday junction branch migration complex subunit RuvB (Photobacterium profundum (strain SS9)).